A 374-amino-acid chain; its full sequence is 4-galactosyl-N-acetylglucosaminide 3-alpha-L-fucosyltransferase FUT5 (374 aa).

Over Met-1–Arg-15 the chain is Cytoplasmic. Residues Cys-16–Leu-34 traverse the membrane as a helical; Signal-anchor for type II membrane protein segment. The Lumenal segment spans residues Arg-35–Thr-374. 4 N-linked (GlcNAc...) asparagine glycosylation sites follow: Asn-60, Asn-105, Asn-167, and Asn-198.

Belongs to the glycosyltransferase 10 family.

It is found in the golgi apparatus. The protein localises to the golgi stack membrane. It carries out the reaction a beta-D-galactosyl-(1-&gt;3)-N-acetyl-beta-D-glucosaminyl derivative + GDP-beta-L-fucose = a beta-D-galactosyl-(1-&gt;3)-[alpha-L-fucosyl-(1-&gt;4)]-N-acetyl-beta-D-glucosaminyl derivative + GDP + H(+). It catalyses the reaction an N-acetyl-alpha-neuraminyl-(2-&gt;3)-beta-D-galactosyl-(1-&gt;4)-N-acetyl-beta-D-glucosaminyl derivative + GDP-beta-L-fucose = an alpha-Neu5Ac-(2-&gt;3)-beta-D-Gal-(1-&gt;4)-[alpha-L-Fuc-(1-&gt;3)]-beta-D-GlcNAc derivative + GDP + H(+). The catalysed reaction is an alpha-Neu5Ac-(2-&gt;3)-beta-D-Gal-(1-&gt;4)-beta-D-GlcNAc-(1-&gt;3)-beta-D-Gal-(1-&gt;4)-[alpha-L-Fuc-(1-&gt;3)]-beta-D-GlcNAc derivative + GDP-beta-L-fucose = an alpha-Neu5Ac-(2-&gt;3)-beta-D-Gal-(1-&gt;4)-[alpha-L-Fuc-(1-&gt;3)]-beta-D-GlcNAc-(1-&gt;3)-beta-D-Gal-(1-&gt;4)-[alpha-L-Fuc-(1-&gt;3)]-beta-D-GlcNAc derivative + GDP + H(+). The enzyme catalyses a beta-D-galactosyl-(1-&gt;4)-N-acetyl-beta-D-glucosaminyl derivative + GDP-beta-L-fucose = a beta-D-galactosyl-(1-&gt;4)-[alpha-L-fucosyl-(1-&gt;3)]-N-acetyl-beta-D-glucosaminyl derivative + GDP + H(+). It carries out the reaction a neolactoside nLc4Cer + GDP-beta-L-fucose = a neolactoside III(3)-alpha-Fuc-nLc4Cer + GDP + H(+). It catalyses the reaction a neolactoside nLc6Cer + GDP-beta-L-fucose = beta-D-galactosyl-(1-&gt;4)-N-acetyl-beta-D-glucosaminyl-(1-&gt;3)-beta-D-galactosyl-(1-&gt;4)-[alpha-L-fucosyl-(1-&gt;3)]-N-acetyl-beta-D-glucosaminyl-(1-&gt;3)-beta-D-galactosyl-(1-&gt;4)-beta-D-glucosyl-(1&lt;-&gt;1')-ceramide + GDP + H(+). The catalysed reaction is a neolactoside nLc6Cer(d18:1(4E)) + GDP-beta-L-fucose = a neolactoside III(3)-alpha-Fuc-nLc6Cer(d18:1(4E)) + GDP + H(+). The enzyme catalyses a neolactoside nLc4Cer(d18:1(4E)) + GDP-beta-L-fucose = a neolactoside III(3)-alpha-Fuc-nLc4Cer(d18:1(4E)) + GDP + H(+). It carries out the reaction a neolactoside VI(3)-alpha-NeuNAc-nLc6Cer + GDP-beta-L-fucose = a neolactoside VI(3)-alpha-NeuAc,III(3)-alphaFuc-nLc6Cer + GDP + H(+). It catalyses the reaction beta-D-galactosyl-(1-&gt;4)-N-acetyl-D-glucosamine + GDP-beta-L-fucose = beta-D-galactosyl-(1-&gt;4)-[alpha-L-fucosyl-(1-&gt;3)]-N-acetyl-D-glucosamine + GDP + H(+). The catalysed reaction is N-acetyl-alpha-neuraminosyl-(2-&gt;3)-beta-D-galactosyl-(1-&gt;4)-N-acetyl-beta-D-glucosamine + GDP-beta-L-fucose = N-acetyl-alpha-neuraminosyl-(2-&gt;3)-beta-D-galactosyl-(1-&gt;4)-[alpha-L-fucosyl-(1-&gt;3)]-N-acetyl-beta-D-glucosamine + GDP + H(+). The enzyme catalyses alpha-L-Fuc-(1-&gt;2)-beta-D-Gal-(1-&gt;4)-D-GlcNAc + GDP-beta-L-fucose = alpha-L-Fuc-(1-&gt;2)-beta-D-Gal-(1-&gt;4)-[alpha-L-Fuc-(1-&gt;3)]-D-GlcNAc + GDP + H(+). It carries out the reaction an alpha-Neu5Ac-(2-&gt;3)-beta-D-Gal-(1-&gt;3)-D-GlcNAc derivative + GDP-beta-L-fucose = an alpha-Neu5Ac-(2-&gt;3)-beta-D-Gal-(1-&gt;3)-[alpha-L-Fuc-(1-&gt;4)]-beta-D-GlcNAc derivative + GDP + H(+). Its pathway is protein modification; protein glycosylation. Its function is as follows. Catalyzes preferentially the transfer of L-fucose, from a guanosine diphosphate-beta-L-fucose, to the N-acetyl-beta-D-glucosamine (GlcNAc) of an N-acetyllactosamine unit (type 2 chain) of an oligosaccharide, or a glycoprotein- and a glycolipid-linked N-acetyllactosamine unit via an alpha (1,3) linkage and participates in the surface expression of VIM-2, Lewis X/SSEA-1 and sialyl Lewis X antigens. Preferentially transfers fucose to the GlcNAc of an internal N-acetyllactosamine unit of a poly-N-acetyllactosamine chain acceptor substrate. Also catalyzes to a lesser extend the transfer of L-fucose to the GlcNAc of a type 1 (beta-D-galactosyl-(1-&gt;3)-N-acetyl-beta-D-glucosaminyl) or H-type 1 (alpha-L-Fuc-(1-&gt;2)-beta-D-Gal-(1-&gt;3)-D-GlcNAc) chain oligosaccharide via an alpha (1,4) linkage. Preferentially catalyzes sialylated type 2 oligosaccharide acceptors over neutral type 2 or H type 2 (alpha-L-Fuc-(1-&gt;2)-beta-D-Gal-(1-&gt;4)-D-GlcNAc) oligosaccharide acceptors. Lactose-based structures are also acceptor substrates. The polypeptide is 4-galactosyl-N-acetylglucosaminide 3-alpha-L-fucosyltransferase FUT5 (Gorilla gorilla gorilla (Western lowland gorilla)).